The primary structure comprises 292 residues: Phosphatidylserine decarboxylase proenzyme (292 aa).

Catalysis depends on charge relay system; for autoendoproteolytic cleavage activity residues Asp-92, His-149, and Ser-256. Residue Ser-256 is the Schiff-base intermediate with substrate; via pyruvic acid; for decarboxylase activity of the active site. Ser-256 carries the pyruvic acid (Ser); by autocatalysis modification.

The protein belongs to the phosphatidylserine decarboxylase family. PSD-B subfamily. Prokaryotic type I sub-subfamily. In terms of assembly, heterodimer of a large membrane-associated beta subunit and a small pyruvoyl-containing alpha subunit. Pyruvate serves as cofactor. Post-translationally, is synthesized initially as an inactive proenzyme. Formation of the active enzyme involves a self-maturation process in which the active site pyruvoyl group is generated from an internal serine residue via an autocatalytic post-translational modification. Two non-identical subunits are generated from the proenzyme in this reaction, and the pyruvate is formed at the N-terminus of the alpha chain, which is derived from the carboxyl end of the proenzyme. The autoendoproteolytic cleavage occurs by a canonical serine protease mechanism, in which the side chain hydroxyl group of the serine supplies its oxygen atom to form the C-terminus of the beta chain, while the remainder of the serine residue undergoes an oxidative deamination to produce ammonia and the pyruvoyl prosthetic group on the alpha chain. During this reaction, the Ser that is part of the protease active site of the proenzyme becomes the pyruvoyl prosthetic group, which constitutes an essential element of the active site of the mature decarboxylase.

It localises to the cell membrane. The catalysed reaction is a 1,2-diacyl-sn-glycero-3-phospho-L-serine + H(+) = a 1,2-diacyl-sn-glycero-3-phosphoethanolamine + CO2. It participates in phospholipid metabolism; phosphatidylethanolamine biosynthesis; phosphatidylethanolamine from CDP-diacylglycerol: step 2/2. Its function is as follows. Catalyzes the formation of phosphatidylethanolamine (PtdEtn) from phosphatidylserine (PtdSer). This chain is Phosphatidylserine decarboxylase proenzyme, found in Baumannia cicadellinicola subsp. Homalodisca coagulata.